Consider the following 316-residue polypeptide: UPF0613 protein PB24D3.06c (316 aa).

The protein belongs to the UPF0613 family.

It is found in the cytoplasm. The protein resides in the nucleus. The polypeptide is UPF0613 protein PB24D3.06c (Schizosaccharomyces pombe (strain 972 / ATCC 24843) (Fission yeast)).